Reading from the N-terminus, the 984-residue chain is Translation initiation factor IF-2 (984 aa).

Disordered regions lie at residues 92–267 (KKRT…ERRR) and 280–392 (MNAP…EEHV). Residues 104 to 123 (PATPEVQPVAEAPAAAPAAP) are compositionally biased toward low complexity. Basic and acidic residues predominate over residues 124–177 (RIDEAELARREEEARRQAELIRRQEEELAEKRRLREEAEAREREQAEKAERAEQ). Low complexity predominate over residues 193-235 (DAAAAAPAKEAAKPAAAPVAAAAAAAEQQAADTKLAAQTAATQ). Basic and acidic residues-rich tracts occupy residues 236 to 267 (AKED…ERRR) and 291 to 302 (KAPEKPQPEKAA). The span at 310 to 335 (PAAPAARPGAPAAPGAAAAPGAAGAG) shows a compositional bias: low complexity. Basic and acidic residues predominate over residues 351-361 (PAKKKEIKTRG). Residues 363–375 (ASGGVGRGNWRGG) are compositionally biased toward gly residues. Positions 381 to 392 (GSNDRGGHEEHV) are enriched in basic and acidic residues. A tr-type G domain is found at 484 to 653 (PRAPVVTVMG…LLQAEVLELK (170 aa)). The segment at 493–500 (GHVDHGKT) is G1. 493–500 (GHVDHGKT) contributes to the GTP binding site. Residues 518 to 522 (GITQH) form a G2 region. The interval 539–542 (DTPG) is G3. GTP is bound by residues 539-543 (DTPGH) and 593-596 (NKID). The interval 593–596 (NKID) is G4. Positions 629-631 (SAK) are G5.

This sequence belongs to the TRAFAC class translation factor GTPase superfamily. Classic translation factor GTPase family. IF-2 subfamily.

It is found in the cytoplasm. Its function is as follows. One of the essential components for the initiation of protein synthesis. Protects formylmethionyl-tRNA from spontaneous hydrolysis and promotes its binding to the 30S ribosomal subunits. Also involved in the hydrolysis of GTP during the formation of the 70S ribosomal complex. This Variovorax paradoxus (strain S110) protein is Translation initiation factor IF-2.